Consider the following 191-residue polypeptide: NAD(P)H-dependent FMN reductase LOT6 (191 aa).

FMN-binding positions include Arg-11, 94 to 97 (QYNW), and Tyr-124.

Homodimer.

It is found in the cytoplasm. The protein resides in the nucleus. It catalyses the reaction FMNH2 + NADP(+) = FMN + NADPH + 2 H(+). The enzyme catalyses FMNH2 + NAD(+) = FMN + NADH + 2 H(+). Its function is as follows. Has several reductase activities that are NAD(P)H-dependent and involve FMN as a cofactor, ferricyanide being the best substrate for reduction. May be involved in ferric iron assimilation. The protein is NAD(P)H-dependent FMN reductase LOT6 (LOT6) of Saccharomyces cerevisiae (strain ATCC 204508 / S288c) (Baker's yeast).